Reading from the N-terminus, the 160-residue chain is Probable prefoldin subunit 5 (160 aa).

This sequence belongs to the prefoldin subunit alpha family. Heterohexamer of two PFD-alpha type and four PFD-beta type subunits.

In terms of biological role, binds specifically to cytosolic chaperonin (c-CPN) and transfers target proteins to it. Binds to nascent polypeptide chain and promotes folding in an environment in which there are many competing pathways for nonnative proteins. The sequence is that of Probable prefoldin subunit 5 (pfdn5) from Dictyostelium discoideum (Social amoeba).